The sequence spans 728 residues: Probable subtilase-type serine protease DR_A0283 (728 aa).

Positions 1 to 22 (MPGALPMKKISLAVLSLTTLLA) are cleaved as a signal peptide. A propeptide spanning residues 23–148 (ACGQPQTSPQ…RTAQDQLGAQ (126 aa)) is cleaved from the precursor. In terms of domain architecture, Peptidase S8 spans 159–471 (QYALDSNHLH…YGLIRMDKLA (313 aa)). Active-site charge relay system residues include Asp188, His242, and Ser412.

This sequence belongs to the peptidase S8 family.

It is found in the secreted. This is Probable subtilase-type serine protease DR_A0283 from Deinococcus radiodurans (strain ATCC 13939 / DSM 20539 / JCM 16871 / CCUG 27074 / LMG 4051 / NBRC 15346 / NCIMB 9279 / VKM B-1422 / R1).